The chain runs to 875 residues: Ubiquitin-protein ligase E3A (875 aa).

Residues Cys44–Cys83 form a C4-type; atypical zinc finger. Over residues Lys175–Glu186 the composition is skewed to basic and acidic residues. Positions Lys175–Lys226 are disordered. The span at Arg213–Gln225 shows a compositional bias: polar residues. Ser218 carries the phosphoserine modification. The E6-binding stretch occupies residues Ile401 to Arg418. The segment at Arg418–Gln517 is interaction with HCV core protein. Phosphotyrosine; by ABL1 is present on Tyr659. One can recognise an HECT domain in the interval Tyr776–Leu875. The active-site Glycyl thioester intermediate is Cys843.

As to quaternary structure, the active form is probably a homotrimer. Binds UBQLN1 and UBQLN2. Interacts with the 26S proteasome. Interacts with BPY2. Interacts with HIF1AN, MAPK6 and NEURL4; interaction with MAPK6 may be mediated by NEURL4. Interacts with the proteasomal subunit PSMD4. Interacts with ESR1 and WBP2. Interacts with BMAL1. Interacts with ARC. In terms of assembly, (Microbial infection) Interacts with HCV core protein and targets it to degradation. (Microbial infection) Interacts with the E6 protein of the cancer-associated human papillomavirus types 16 and 18. The E6/E6-AP complex binds to and targets the p53/TP53 tumor-suppressor protein for ubiquitin-mediated proteolysis. Phosphorylation at Tyr-659 by ABL1 impairs E3 ligase activity and protects p53/TP53 from degradation in (HPV)-infected cells.

It localises to the cytoplasm. The protein resides in the nucleus. It catalyses the reaction S-ubiquitinyl-[E2 ubiquitin-conjugating enzyme]-L-cysteine + [acceptor protein]-L-lysine = [E2 ubiquitin-conjugating enzyme]-L-cysteine + N(6)-ubiquitinyl-[acceptor protein]-L-lysine.. The protein operates within protein modification; protein ubiquitination. In terms of biological role, E3 ubiquitin-protein ligase which accepts ubiquitin from an E2 ubiquitin-conjugating enzyme in the form of a thioester and transfers it to its substrates. Several substrates have been identified including the BMAL1, ARC, LAMTOR1, RAD23A and RAD23B, MCM7 (which is involved in DNA replication), annexin A1, the PML tumor suppressor, and the cell cycle regulator CDKN1B. Additionally, may function as a cellular quality control ubiquitin ligase by helping the degradation of the cytoplasmic misfolded proteins. Finally, UBE3A also promotes its own degradation in vivo. Plays an important role in the regulation of the circadian clock: involved in the ubiquitination of the core clock component BMAL1, leading to its proteasomal degradation. Acts as transcriptional coactivator of progesterone receptor PGR upon progesterone hormone activation. Acts as a regulator of synaptic development by mediating ubiquitination and degradation of ARC. Required for synaptic remodeling in neurons by mediating ubiquitination and degradation of LAMTOR1, thereby limiting mTORC1 signaling and activity-dependent synaptic remodeling. Synergizes with WBP2 in enhancing PGR activity. Its function is as follows. (Microbial infection) Catalyzes the high-risk human papilloma virus E6-mediated ubiquitination of p53/TP53, contributing to the neoplastic progression of cells infected by these viruses. This chain is Ubiquitin-protein ligase E3A, found in Homo sapiens (Human).